Reading from the N-terminus, the 358-residue chain is G-protein coupled receptor 87 (358 aa).

Over 1-47 (MGLNLTLTKLPGNELYSQASHTANSTSEGHGKNSTLHNKFDTIILPV) the chain is Extracellular. N-linked (GlcNAc...) asparagine glycans are attached at residues asparagine 4, asparagine 24, and asparagine 33. Residues 48–68 (LYLVIFVASILLNGLAVWIFF) traverse the membrane as a helical segment. Topologically, residues 69–75 (HIRNKTS) are cytoplasmic. A helical membrane pass occupies residues 76–96 (FIFYLKNIVVADLIMTLTFPF). Over 97-116 (RIVRDAGFGPWYFEFILCRY) the chain is Extracellular. A disulfide bond links cysteine 114 and cysteine 192. A helical membrane pass occupies residues 117–137 (TSVLFYANMYTSIVFLGLISV). Residues 138–159 (DRYLKVVKPFGDSRMYSITFTK) lie on the Cytoplasmic side of the membrane. The chain crosses the membrane as a helical span at residues 160 to 180 (VLSVCVWVIMAILSLPNIILT). Topologically, residues 181–208 (NGQPTKENIHDCMKLKSPLGAKWHMAVT) are extracellular. Residues 209 to 229 (YVDSCLFVAVLVILIGCYIAI) form a helical membrane-spanning segment. Residues 230-256 (SRYIHKSSRQFISQSSRKRKHNQSIRV) are Cytoplasmic-facing. A helical transmembrane segment spans residues 257–277 (VVAVFFTCFLPYHLCRIPFTF). Residues 278–297 (SNLDRLLDESAHKILYYCKE) lie on the Extracellular side of the membrane. The chain crosses the membrane as a helical span at residues 298–318 (MTLFLSACNVCLDPIIYFFMC). Over 319 to 358 (KSFSRRLFKKSNIRTRSESIRSLQSVRRSEVRIYYDYTDV) the chain is Cytoplasmic.

Belongs to the G-protein coupled receptor 1 family. In terms of tissue distribution, expressed at high levels in testis and brain and to a lesser extent placenta, ovary, prostate, and skeletal muscle but not in heart, lung, kidney, liver or intestine.

The protein localises to the cell membrane. Its function is as follows. Receptor for lysophosphatidic acid (LPA). Necessary for p53/TP53-dependent survival in response to DNA damage. Promotes the Hippo-YAP signaling pathway and thereby modulates glycolysis and oxidative stress production by the regulation of hexokinase-2/HK2. In Mus musculus (Mouse), this protein is G-protein coupled receptor 87 (Gpr87).